The chain runs to 250 residues: Leucyl/phenylalanyl-tRNA--protein transferase (250 aa).

The protein belongs to the L/F-transferase family.

The protein resides in the cytoplasm. It carries out the reaction N-terminal L-lysyl-[protein] + L-leucyl-tRNA(Leu) = N-terminal L-leucyl-L-lysyl-[protein] + tRNA(Leu) + H(+). The enzyme catalyses N-terminal L-arginyl-[protein] + L-leucyl-tRNA(Leu) = N-terminal L-leucyl-L-arginyl-[protein] + tRNA(Leu) + H(+). The catalysed reaction is L-phenylalanyl-tRNA(Phe) + an N-terminal L-alpha-aminoacyl-[protein] = an N-terminal L-phenylalanyl-L-alpha-aminoacyl-[protein] + tRNA(Phe). Functionally, functions in the N-end rule pathway of protein degradation where it conjugates Leu, Phe and, less efficiently, Met from aminoacyl-tRNAs to the N-termini of proteins containing an N-terminal arginine or lysine. The sequence is that of Leucyl/phenylalanyl-tRNA--protein transferase from Cupriavidus pinatubonensis (strain JMP 134 / LMG 1197) (Cupriavidus necator (strain JMP 134)).